We begin with the raw amino-acid sequence, 1383 residues long: Insulin receptor (1383 aa).

The signal sequence occupies residues 1–26 (MGSGRGCETTAVPLLMAVAVAGGTAG). Extracellular-side segments run 27–759 (HLYP…TRPS) and 764–957 (SLEE…NIAK). The cysteines at positions 34 and 52 are disulfide-linked. N-linked (GlcNAc...) asparagine glycans are attached at residues asparagine 42, asparagine 51, asparagine 104, and asparagine 137. Cystine bridges form between cysteine 152/cysteine 181, cysteine 185/cysteine 208, cysteine 195/cysteine 214, cysteine 218/cysteine 227, cysteine 222/cysteine 233, cysteine 234/cysteine 242, cysteine 238/cysteine 251, cysteine 254/cysteine 263, and cysteine 267/cysteine 279. N-linked (GlcNAc...) asparagine glycosylation occurs at asparagine 241. Asparagine 281 is a glycosylation site (N-linked (GlcNAc...) asparagine). 5 disulfide bridges follow: cysteine 285–cysteine 310, cysteine 292–cysteine 300, cysteine 314–cysteine 327, cysteine 330–cysteine 334, and cysteine 338–cysteine 359. N-linked (GlcNAc...) asparagine glycosylation occurs at asparagine 321. Asparagine 363 carries N-linked (GlcNAc...) asparagine glycosylation. Serine 399 bears the Phosphoserine mark. Tyrosine 400 is subject to Phosphotyrosine. Serine 406 carries the post-translational modification Phosphoserine. Asparagine 423 and asparagine 444 each carry an N-linked (GlcNAc...) asparagine glycan. Cysteine 461 and cysteine 494 are disulfide-bonded. 4 N-linked (GlcNAc...) asparagine glycosylation sites follow: asparagine 540, asparagine 634, asparagine 652, and asparagine 699. The Fibronectin type-III 1 domain occupies 625-727 (VPLDPISVSN…SQILKELEES (103 aa)). Residues cysteine 675 and cysteine 900 are joined by a disulfide bond. Residues 687–709 (SPPFESDDSQKHNQSEYDDSASE) form a disordered region. The segment at 734-742 (EDYLHNVVF) is insulin-binding. The tract at residues 747–783 (TSSGNGAEDTRPSRKRRSLEEVGNVTATTPTLPDFPN) is disordered. Fibronectin type-III domains are found at residues 754–848 (EDTR…TMPE) and 854–948 (IVGP…VTDY). Residues asparagine 770, asparagine 783, asparagine 921, and asparagine 934 are each glycosylated (N-linked (GlcNAc...) asparagine). The segment covering 771 to 783 (VTATTPTLPDFPN) has biased composition (polar residues). The helical transmembrane segment at 958 to 978 (IIIGPLIFVFLFSVVIGSIYL) threads the bilayer. Residues 979-1383 (FLRKRQPDGP…VLTLPRSNPS (405 aa)) lie on the Cytoplasmic side of the membrane. The segment at 997–1000 (NPEY) is important for interaction with IRS1, SHC1 and STAT5B. At tyrosine 1000 the chain carries Phosphotyrosine; by autocatalysis. In terms of domain architecture, Protein kinase spans 1024 to 1299 (ITLLRELGQG…LLKDDLHPSF (276 aa)). Positions 1034 and 1058 each coordinate ATP. Residue lysine 1080 forms a Glycyl lysine isopeptide (Lys-Gly) (interchain with G-Cter in ubiquitin) linkage. At cysteine 1084 the chain carries S-nitrosocysteine. Residue 1105–1111 (ELMAHGD) coordinates ATP. Catalysis depends on aspartate 1160, which acts as the Proton donor/acceptor. Residues 1164–1165 (RN) and aspartate 1178 contribute to the ATP site. Phosphotyrosine; by autocatalysis occurs at positions 1186, 1190, 1191, 1356, and 1362. The interval 1361–1383 (PYTHMNGGKKNGRVLTLPRSNPS) is disordered. Positions 1362–1365 (YTHM) are PIK3R1 binding.

The protein belongs to the protein kinase superfamily. Tyr protein kinase family. Insulin receptor subfamily. As to quaternary structure, tetramer of 2 alpha and 2 beta chains linked by disulfide bonds. The alpha chains carry the insulin-binding regions, while the beta chains carry the kinase domain. Forms a hybrid receptor with IGF1R, the hybrid is a tetramer consisting of 1 alpha chain and 1 beta chain of INSR and 1 alpha chain and 1 beta chain of IGF1R. Interacts with SORBS1 but dissociates from it following insulin stimulation. Binds SH2B2. Activated form of INSR interacts (via Tyr-1000) with the PTB/PID domains of IRS1 and SHC1. The sequences surrounding the phosphorylated NPXY motif contribute differentially to either IRS1 or SHC1 recognition. Interacts (via tyrosines in the C-terminus) with IRS2 (via PTB domain and 591-786 AA); the 591-786 would be the primary anchor of IRS2 to INSR while the PTB domain would have a stabilizing action on the interaction with INSR. Interacts with the SH2 domains of the 85 kDa regulatory subunit of PI3K (PIK3R1) in vitro, when autophosphorylated on tyrosine residues. Interacts with SOCS7. Interacts (via the phosphorylated Tyr-1000), with SOCS3. Interacts (via the phosphorylated Tyr-1186, Tyr-1190, Tyr-1191) with SOCS1. Interacts with ARRB2. Interacts with GRB10; this interaction blocks the association between IRS1/IRS2 and INSR, significantly reduces insulin-stimulated tyrosine phosphorylation of IRS1 and IRS2 and thus decreases insulin signaling. Interacts with PDPK1. Interacts (via Tyr-1191) with GRB14 (via BPS domain); this interaction protects the tyrosines in the activation loop from dephosphorylation, but promotes dephosphorylation of Tyr-1000, this results in decreased interaction with, and phosphorylation of, IRS1. Interacts (via subunit alpha) with ENPP1 (via 485-599 AA); this interaction blocks autophosphorylation. Interacts with PTPRE; this interaction is dependent of Tyr-1186, Tyr-1190 and Tyr-1191 of the INSR. Interacts with STAT5B (via SH2 domain). Interacts with PTPRF. Interacts with GRB7. Interacts with CAV2 (tyrosine-phosphorylated form); the interaction is increased with 'Tyr-27'phosphorylation of CAV2. Interacts with ATIC; ATIC together with PRKAA2/AMPK2 and HACD3/PTPLAD1 is proposed to be part of a signaling netwok regulating INSR autophosphorylation and endocytosis. Interacts with the insulin receptor SORL1; this interaction strongly increases its surface exposure, hence strengthens insulin signal reception. Interacts (tyrosine phosphorylated) with CCDC88A/GIV (via SH2-like region); binding requires autophosphorylation of the Insr C-terminal region. Interacts with GNAI3; the interaction is probably mediated by CCDC88A/GIV. Interacts with LMBRD1. Interacts (in response to insulin stimulation) with NCK1; this interaction may recruit PTPN1 to mediate INSR dephosphorylation. Interacts with CD248; this interaction diminishes INSR autophosphorylation. In terms of processing, after being transported from the endoplasmic reticulum to the Golgi apparatus, the single glycosylated precursor is further glycosylated and then cleaved, followed by its transport to the plasma membrane. Post-translationally, autophosphorylated on tyrosine residues in response to insulin. Phosphorylation of Tyr-1000 is required for binding to IRS1, SHC1 and STAT5B. May also be phosphorylated at Tyr-1186 and Tyr-1191 by mTORC2. Dephosphorylated by PTPRE at Tyr-1000, Tyr-1186, Tyr-1190 and Tyr-1191. Dephosphorylated by PTPRF and PTPN1. Dephosphorylated by PTPN2; down-regulates insulin-induced signaling. S-nitrosylation at Cys-1084 by BLVRB inhibits the receptor tyrosine kinase, thereby inhibiting insulin signaling. In terms of processing, ubiquitinated by MARCHF1; leading to degradation thereby reducing surface INSR expression.

It localises to the cell membrane. The protein localises to the late endosome. Its subcellular location is the lysosome. The catalysed reaction is L-tyrosyl-[protein] + ATP = O-phospho-L-tyrosyl-[protein] + ADP + H(+). With respect to regulation, activated in response to insulin. Autophosphorylation activates the kinase activity. PTPN1, PTPRE and PTPRF dephosphorylate important tyrosine residues, thereby reducing INSR activity. Inhibited by ENPP1. GRB10 and GRB14 inhibit the catalytic activity of the INSR, they block access of substrates to the activated receptor. SOCS1 and SOCS3 act as negative regulators of INSR activity, they bind to the activated INRS and interfere with the phosphorylation of INSR substrates. Receptor tyrosine kinase which mediates the pleiotropic actions of insulin. Binding of insulin leads to phosphorylation of several intracellular substrates, including, insulin receptor substrates (IRS1, 2, 3, 4), SHC, GAB1, CBL and other signaling intermediates. Each of these phosphorylated proteins serve as docking proteins for other signaling proteins that contain Src-homology-2 domains (SH2 domain) that specifically recognize different phosphotyrosine residues, including the p85 regulatory subunit of PI3K and SHP2. Phosphorylation of IRSs proteins lead to the activation of two main signaling pathways: the PI3K-AKT/PKB pathway, which is responsible for most of the metabolic actions of insulin, and the Ras-MAPK pathway, which regulates expression of some genes and cooperates with the PI3K pathway to control cell growth and differentiation. Binding of the SH2 domains of PI3K to phosphotyrosines on IRS1 leads to the activation of PI3K and the generation of phosphatidylinositol-(3, 4, 5)-triphosphate (PIP3), a lipid second messenger, which activates several PIP3-dependent serine/threonine kinases, such as PDPK1 and subsequently AKT/PKB. The net effect of this pathway is to produce a translocation of the glucose transporter SLC2A4/GLUT4 from cytoplasmic vesicles to the cell membrane to facilitate glucose transport. Moreover, upon insulin stimulation, activated AKT/PKB is responsible for: anti-apoptotic effect of insulin by inducing phosphorylation of BAD; regulates the expression of gluconeogenic and lipogenic enzymes by controlling the activity of the winged helix or forkhead (FOX) class of transcription factors. Another pathway regulated by PI3K-AKT/PKB activation is mTORC1 signaling pathway which regulates cell growth and metabolism and integrates signals from insulin. AKT mediates insulin-stimulated protein synthesis by phosphorylating TSC2 thereby activating mTORC1 pathway. The Ras/RAF/MAP2K/MAPK pathway is mainly involved in mediating cell growth, survival and cellular differentiation of insulin. Phosphorylated IRS1 recruits GRB2/SOS complex, which triggers the activation of the Ras/RAF/MAP2K/MAPK pathway. In addition to binding insulin, the insulin receptor can bind insulin-like growth factors (IGFI and IGFII). When present in a hybrid receptor with IGF1R, binds IGF1. In adipocytes, inhibits lipolysis. The chain is Insulin receptor (Insr) from Rattus norvegicus (Rat).